The sequence spans 444 residues: Tubulin beta-4A chain (444 aa).

The MREI motif signature appears at 1 to 4; that stretch reads MREI. Positions 11, 69, 138, 142, 143, and 144 each coordinate GTP. E69 serves as a coordination point for Mg(2+). S172 bears the Phosphoserine; by CDK1 mark. GTP contacts are provided by N204 and N226. Residue E436 is modified to 5-glutamyl polyglutamate.

This sequence belongs to the tubulin family. As to quaternary structure, dimer of alpha and beta chains. A typical microtubule is a hollow water-filled tube with an outer diameter of 25 nm and an inner diameter of 15 nM. Alpha-beta heterodimers associate head-to-tail to form protofilaments running lengthwise along the microtubule wall with the beta-tubulin subunit facing the microtubule plus end conferring a structural polarity. Microtubules usually have 13 protofilaments but different protofilament numbers can be found in some organisms and specialized cells. The cofactor is Mg(2+). Some glutamate residues at the C-terminus are polyglycylated, resulting in polyglycine chains on the gamma-carboxyl group. Glycylation is mainly limited to tubulin incorporated into axonemes (cilia and flagella) whereas glutamylation is prevalent in neuronal cells, centrioles, axonemes, and the mitotic spindle. Both modifications can coexist on the same protein on adjacent residues, and lowering polyglycylation levels increases polyglutamylation, and reciprocally. Cilia and flagella glycylation is required for their stability and maintenance. Flagella glycylation controls sperm motility. Post-translationally, some glutamate residues at the C-terminus are polyglutamylated, resulting in polyglutamate chains on the gamma-carboxyl group. Polyglutamylation plays a key role in microtubule severing by spastin (SPAST). SPAST preferentially recognizes and acts on microtubules decorated with short polyglutamate tails: severing activity by SPAST increases as the number of glutamates per tubulin rises from one to eight, but decreases beyond this glutamylation threshold. Glutamylation is also involved in cilia motility. In terms of processing, phosphorylated on Ser-172 by CDK1 during the cell cycle, from metaphase to telophase, but not in interphase. This phosphorylation inhibits tubulin incorporation into microtubules.

The protein resides in the cytoplasm. The protein localises to the cytoskeleton. Tubulin is the major constituent of microtubules, a cylinder consisting of laterally associated linear protofilaments composed of alpha- and beta-tubulin heterodimers. Microtubules grow by the addition of GTP-tubulin dimers to the microtubule end, where a stabilizing cap forms. Below the cap, tubulin dimers are in GDP-bound state, owing to GTPase activity of alpha-tubulin. This is Tubulin beta-4A chain (TUBB4A) from Bos taurus (Bovine).